A 484-amino-acid chain; its full sequence is MDFSDEDDDENCFGSRFNDGVNEEEEDEEGFVFNDDVEENEEEEGFASDFYKAGSDWSCLVEDEETVSSSVKKMKQSNLFQIWGLQENSPDTTKKMKQTDLFQSWGLQKPSPFTSPASNSAKKTTSALGKRRRDSSFSNDSPRPCPFYKKLPGTPFTVDAFRYGCVQGCSAYFLTHFHADHYIGLTKAWSHGPIYCSSLTSRLLRLSLSVNPSSIHPLELDVEYTINGIKVTLIEANHCPGAALIHFRLLDGTCYLHTGDFRASKQMQTHPLLFNQRVHVLYLDTTYCNPRYKFPSKEDVLSYVVRITKDFLRKQPKTLIVVGSYSIGKECVYLAIAKALGVKIFANASRRRILQSFGWDDISKNLSTDGKATCLHVLPMSSLKVERLDEHLKIYREQYGAVLAFRPTGWTYSEKIGEHLDLIKPTSRGKITIYGVPYSEHSSFTELREFVQFLRPDKIIPTVNNGNAGTREKMQSCFREWLRR.

The span at 1–11 (MDFSDEDDDEN) shows a compositional bias: acidic residues. 2 disordered regions span residues 1–27 (MDFSDEDDDENCFGSRFNDGVNEEEED) and 109–141 (KPSPFTSPASNSAKKTTSALGKRRRDSSFSNDS). Polar residues predominate over residues 109 to 127 (KPSPFTSPASNSAKKTTSA).

The protein belongs to the DNA repair metallo-beta-lactamase (DRMBL) family.

Its subcellular location is the nucleus. In terms of biological role, may be required for repair of DNA lesions formed after exposure to oxidative stress. This is DNA cross-link repair protein SNM1 (SNM1) from Arabidopsis thaliana (Mouse-ear cress).